We begin with the raw amino-acid sequence, 78 residues long: Defensin-like protein (78 aa).

The N-terminal stretch at 1–31 (MGRSIRLFATFFLIAMLFLSTEMGPMTSAEA) is a signal peptide. 4 cysteine pairs are disulfide-bonded: Cys34/Cys78, Cys45/Cys65, Cys51/Cys72, and Cys55/Cys74.

The protein belongs to the DEFL family. In terms of tissue distribution, predominantly expressed in the pistil during all stages of flower development.

The protein resides in the secreted. May be involved in the defense of the pistil against pathogen infection. In Petunia integrifolia (Violet-flowered petunia), this protein is Defensin-like protein.